The sequence spans 344 residues: Protein-glutamate methylesterase/protein-glutamine glutaminase 1 (344 aa).

Residues 5–122 (RVLVVDDSAT…GTQEALAEIV (118 aa)) form the Response regulatory domain. D56 carries the post-translational modification 4-aspartylphosphate. Residues 151–343 (FMPSGDIVAI…QSILDLASAR (193 aa)) enclose the CheB-type methylesterase domain. Active-site residues include S163, H189, and D285.

It belongs to the CheB family. Post-translationally, phosphorylated by CheA. Phosphorylation of the N-terminal regulatory domain activates the methylesterase activity.

The protein localises to the cytoplasm. It catalyses the reaction [protein]-L-glutamate 5-O-methyl ester + H2O = L-glutamyl-[protein] + methanol + H(+). It carries out the reaction L-glutaminyl-[protein] + H2O = L-glutamyl-[protein] + NH4(+). Functionally, involved in chemotaxis. Part of a chemotaxis signal transduction system that modulates chemotaxis in response to various stimuli. Catalyzes the demethylation of specific methylglutamate residues introduced into the chemoreceptors (methyl-accepting chemotaxis proteins or MCP) by CheR. Also mediates the irreversible deamidation of specific glutamine residues to glutamic acid. In Caulobacter vibrioides (strain ATCC 19089 / CIP 103742 / CB 15) (Caulobacter crescentus), this protein is Protein-glutamate methylesterase/protein-glutamine glutaminase 1.